The chain runs to 374 residues: Ribosomal RNA large subunit methyltransferase M (374 aa).

S-adenosyl-L-methionine-binding positions include serine 188, 221–224, aspartate 240, aspartate 260, and aspartate 276; that span reads CPGG. The active-site Proton acceptor is the lysine 305.

This sequence belongs to the class I-like SAM-binding methyltransferase superfamily. RNA methyltransferase RlmE family. RlmM subfamily. As to quaternary structure, monomer.

It is found in the cytoplasm. The enzyme catalyses cytidine(2498) in 23S rRNA + S-adenosyl-L-methionine = 2'-O-methylcytidine(2498) in 23S rRNA + S-adenosyl-L-homocysteine + H(+). Catalyzes the 2'-O-methylation at nucleotide C2498 in 23S rRNA. In Edwardsiella ictaluri (strain 93-146), this protein is Ribosomal RNA large subunit methyltransferase M.